A 277-amino-acid chain; its full sequence is 3-methyl-2-oxobutanoate hydroxymethyltransferase (277 aa).

Mg(2+) contacts are provided by Asp43 and Asp82. 3-methyl-2-oxobutanoate is bound by residues 43–44 (DS), Asp82, and Lys112. Glu114 serves as a coordination point for Mg(2+). Glu181 functions as the Proton acceptor in the catalytic mechanism.

It belongs to the PanB family. In terms of assembly, homodecamer; pentamer of dimers. Mg(2+) is required as a cofactor.

Its subcellular location is the cytoplasm. The enzyme catalyses 3-methyl-2-oxobutanoate + (6R)-5,10-methylene-5,6,7,8-tetrahydrofolate + H2O = 2-dehydropantoate + (6S)-5,6,7,8-tetrahydrofolate. Its pathway is cofactor biosynthesis; (R)-pantothenate biosynthesis; (R)-pantoate from 3-methyl-2-oxobutanoate: step 1/2. Functionally, catalyzes the reversible reaction in which hydroxymethyl group from 5,10-methylenetetrahydrofolate is transferred onto alpha-ketoisovalerate to form ketopantoate. The chain is 3-methyl-2-oxobutanoate hydroxymethyltransferase from Listeria innocua serovar 6a (strain ATCC BAA-680 / CLIP 11262).